The sequence spans 252 residues: 5-oxoprolinase subunit A (252 aa).

The protein belongs to the LamB/PxpA family. Forms a complex composed of PxpA, PxpB and PxpC.

It catalyses the reaction 5-oxo-L-proline + ATP + 2 H2O = L-glutamate + ADP + phosphate + H(+). Catalyzes the cleavage of 5-oxoproline to form L-glutamate coupled to the hydrolysis of ATP to ADP and inorganic phosphate. This is 5-oxoprolinase subunit A from Chloroflexus aggregans (strain MD-66 / DSM 9485).